The chain runs to 642 residues: Polyglycine hydrolase (642 aa).

Positions 1–23 are cleaved as a signal peptide; that stretch reads MYTSRLLLSNLASCLSLATLVAS. Asn37, Asn100, Asn159, and Asn341 each carry an N-linked (GlcNAc...) asparagine glycan. Cys149 and Cys183 are oxidised to a cystine. Ser370 is a catalytic residue. N-linked (GlcNAc...) asparagine glycosylation is found at Asn390, Asn407, Asn444, Asn487, and Asn494.

Belongs to the peptidase S12 family.

The protein localises to the secreted. The catalysed reaction is a glycyl-glycyl-[protein] + H2O = N-terminal glycyl-[protein] + [protein]-C-terminal glycine. Not inhibited by phenylmethylsulfonyl fluoride (PMSF; serine peptidase class S1 inhibitor), clavulanic acid (beta-lactamase inhibitor) or ampicillin (penicillin-binding protein (PBP) inhibitor). Functionally, serine-type endopeptidase that cleaves Gly-Gly bonds in the polyglycine linker of host plant class IV chitinases to disrupt their chitin-binding, and thereby plays a role in lowering the defense responses of the host to the fungus. Degrades Z.mays Endochitinase A (CHIA). Degrades Z.mays Endochitinase B (CHIB). Has no activity on Z.mays CHIA following CHIA cleavage by fungalysin. The chain is Polyglycine hydrolase from Epicoccum sorghinum (Endophyte fungus).